Here is a 142-residue protein sequence, read N- to C-terminus: Lysosomal enzyme trafficking factor (142 aa).

2 helical membrane passes run 8–28 (MGWIGVGLYLLASVAAVYYIF) and 76–96 (LLPFWVWATIFLLPYLQVFLF).

The protein belongs to the LYSET family.

It is found in the golgi apparatus membrane. Its function is as follows. Required for mannose-6-phosphate-dependent trafficking of lysosomal enzymes. LYSET bridges GlcNAc-1-phosphate transferase (GNPTAB), to the membrane-bound transcription factor site-1 protease (MBTPS1), thus allowing proteolytic activation of the GNPTAB. GNPTAB is involved in the regulation of M6P-dependent Golgi-to-lysosome trafficking of lysosomal enzymes. LYSET is thus an essential factor for maturation and delivery of lysosomal hydrolases. In Danio rerio (Zebrafish), this protein is Lysosomal enzyme trafficking factor (tmem251).